A 268-amino-acid polypeptide reads, in one-letter code: Tryptophan synthase alpha chain (268 aa).

Catalysis depends on proton acceptor residues Glu-49 and Asp-60.

It belongs to the TrpA family. Tetramer of two alpha and two beta chains.

The catalysed reaction is (1S,2R)-1-C-(indol-3-yl)glycerol 3-phosphate + L-serine = D-glyceraldehyde 3-phosphate + L-tryptophan + H2O. The protein operates within amino-acid biosynthesis; L-tryptophan biosynthesis; L-tryptophan from chorismate: step 5/5. Functionally, the alpha subunit is responsible for the aldol cleavage of indoleglycerol phosphate to indole and glyceraldehyde 3-phosphate. The protein is Tryptophan synthase alpha chain of Shigella dysenteriae serotype 1 (strain Sd197).